A 286-amino-acid chain; its full sequence is E3 ubiquitin-protein ligase RNF170 (286 aa).

Topologically, residues 1–52 (MQRYWRFQDNKIQDICFGVLGESWIQRPVMARYYSEGQSLQQDDSFIEGVSD) are lumenal. A helical membrane pass occupies residues 53-73 (QVLVAVVVSLALTATLLYALL). Residues 74–229 (RNVQQNIHPE…GGLFWMFRIR (156 aa)) lie on the Cytoplasmic side of the membrane. The RING-type zinc-finger motif lies at 115 to 158 (CPICLHQASFPVETNCGHLFCGSCIIAYWRYGSWLGAISCPICR). A helical membrane pass occupies residues 230–250 (IMLCLMGAFFYLISPLDFVPE). Position 251 (alanine 251) is a topological domain, lumenal. Residues 252–272 (LFGILGFLDDFFVIFLLLIYI) form a helical membrane-spanning segment. Over 273–286 (SIMYREVITQRLTR) the chain is Cytoplasmic.

As to quaternary structure, constitutively associated with the ERLIN1/ERLIN 2 complex. Interacts with activated ITPR1.

It is found in the endoplasmic reticulum membrane. The catalysed reaction is S-ubiquitinyl-[E2 ubiquitin-conjugating enzyme]-L-cysteine + [acceptor protein]-L-lysine = [E2 ubiquitin-conjugating enzyme]-L-cysteine + N(6)-ubiquitinyl-[acceptor protein]-L-lysine.. It functions in the pathway protein modification; protein ubiquitination. E3 ubiquitin-protein ligase that plays an essential role in stimulus-induced inositol 1,4,5-trisphosphate receptor type 1 (ITPR1) ubiquitination and degradation via the endoplasmic reticulum-associated degradation (ERAD) pathway. Also involved in ITPR1 turnover in resting cells. Selectively inhibits the TLR3-triggered innate immune response by promoting the 'Lys-48'-linked polyubiquitination and degradation of TLR3. This chain is E3 ubiquitin-protein ligase RNF170 (Rnf170), found in Mus musculus (Mouse).